A 64-amino-acid polypeptide reads, in one-letter code: MLILTRKIGESLLIGDNVEITVLSVRGNQVKLGVNAPKEVSVHREEIYQRIKALADDVASDTQQ.

Belongs to the CsrA/RsmA family. In terms of assembly, homodimer; the beta-strands of each monomer intercalate to form a hydrophobic core, while the alpha-helices form wings that extend away from the core.

It is found in the cytoplasm. Functionally, a key translational regulator that binds mRNA to regulate translation initiation and/or mRNA stability. Mediates global changes in gene expression, shifting from rapid growth to stress survival by linking envelope stress, the stringent response and the catabolite repression systems. Usually binds in the 5'-UTR; binding at or near the Shine-Dalgarno sequence prevents ribosome-binding, repressing translation, binding elsewhere in the 5'-UTR can activate translation and/or stabilize the mRNA. Its function is antagonized by small RNA(s). This Actinobacillus pleuropneumoniae serotype 5b (strain L20) protein is Translational regulator CsrA.